Consider the following 128-residue polypeptide: MSFEYPDNLKYMDSHEYVRLEGDVATVGITAFAIDQLGDIVFIELPEVGDELSQGETMGNIESVKAVEDIYAPINGTVLECNTAIADAPEQLAEDPYNNGWLLKIKVSGPAALDKAMSASDYQAKVEG.

One can recognise a Lipoyl-binding domain in the interval 24-106 (VATVGITAFA…YNNGWLLKIK (83 aa)). Lys65 carries the N6-lipoyllysine modification.

It belongs to the GcvH family. The glycine cleavage system is composed of four proteins: P, T, L and H. It depends on (R)-lipoate as a cofactor.

Its function is as follows. The glycine cleavage system catalyzes the degradation of glycine. The H protein shuttles the methylamine group of glycine from the P protein to the T protein. The protein is Glycine cleavage system H protein of Acaryochloris marina (strain MBIC 11017).